We begin with the raw amino-acid sequence, 271 residues long: NADPH-dependent 7-cyano-7-deazaguanine reductase (271 aa).

81-83 (IES) is a substrate binding site. 83-84 (SK) serves as a coordination point for NADPH. C177 acts as the Thioimide intermediate in catalysis. Residue D184 is the Proton donor of the active site. Residue 216-217 (HE) coordinates substrate. An NADPH-binding site is contributed by 245–246 (RG).

This sequence belongs to the GTP cyclohydrolase I family. QueF type 2 subfamily. In terms of assembly, homodimer.

It is found in the cytoplasm. It carries out the reaction 7-aminomethyl-7-carbaguanine + 2 NADP(+) = 7-cyano-7-deazaguanine + 2 NADPH + 3 H(+). The protein operates within tRNA modification; tRNA-queuosine biosynthesis. Catalyzes the NADPH-dependent reduction of 7-cyano-7-deazaguanine (preQ0) to 7-aminomethyl-7-deazaguanine (preQ1). This Xanthomonas campestris pv. campestris (strain 8004) protein is NADPH-dependent 7-cyano-7-deazaguanine reductase.